Consider the following 561-residue polypeptide: Putative cuticle collagen 145 (561 aa).

Residues 1 to 30 (MEKILVTLSTGAASIAVLAVLFTIPSLYNT) form the signal peptide. Positions 100-112 (TCPPGPPGPPGQP) are enriched in pro residues. Disordered stretches follow at residues 100 to 134 (TCPP…TYAP), 148 to 271 (PQGP…PGGP), 367 to 398 (TCPP…NTAT), and 422 to 540 (TGPA…GPGL). Triple-helical region stretches follow at residues 102–127 (PPGP…KGED) and 153–276 (GPEG…LPGN). Low complexity-rich tracts occupy residues 164–209 (AGPD…PGQD) and 219–265 (APGA…DGQP). Pro residues predominate over residues 367 to 379 (TCPPGPPGPPGQP). A triple-helical region region spans residues 413-544 (KCPQGPAGPT…PGGPGLPGND (132 aa)). Composition is skewed to low complexity over residues 422–467 (TGPA…PGQD) and 486–532 (APGA…DGQP). A Collagen-like domain is found at 485-543 (GAPGAPGNAGPAGPAGQDGFPGQDGQPGPAGPAGQDGFPGNAGSDGQPGAPGGPGLPGN).

The protein belongs to the cuticular collagen family. As to quaternary structure, collagen polypeptide chains are complexed within the cuticle by disulfide bonds and other types of covalent cross-links.

Nematode cuticles are composed largely of collagen-like proteins. The cuticle functions both as an exoskeleton and as a barrier to protect the worm from its environment. The protein is Putative cuticle collagen 145 of Caenorhabditis briggsae.